The chain runs to 361 residues: Ribosomal RNA small subunit methyltransferase H (361 aa).

S-adenosyl-L-methionine is bound by residues 54 to 56, aspartate 74, tyrosine 101, aspartate 122, and glutamine 129; that span reads GGH. Residues 318–361 are disordered; that stretch reads ARNSRASSAKLRAAQRLAEGQAPRPRRRNKYAPEGRDEPEGGAA. Residues 348–361 show a composition bias toward basic and acidic residues; it reads YAPEGRDEPEGGAA.

Belongs to the methyltransferase superfamily. RsmH family.

The protein resides in the cytoplasm. The catalysed reaction is cytidine(1402) in 16S rRNA + S-adenosyl-L-methionine = N(4)-methylcytidine(1402) in 16S rRNA + S-adenosyl-L-homocysteine + H(+). In terms of biological role, specifically methylates the N4 position of cytidine in position 1402 (C1402) of 16S rRNA. This chain is Ribosomal RNA small subunit methyltransferase H, found in Nitratidesulfovibrio vulgaris (strain DSM 19637 / Miyazaki F) (Desulfovibrio vulgaris).